A 62-amino-acid polypeptide reads, in one-letter code: Photosystem II reaction center protein Z (62 aa).

Transmembrane regions (helical) follow at residues 8–28 (AVFALIATSSILLISVPVVFA) and 41–61 (FSGTSLWIGLVFLVGILNSLI).

This sequence belongs to the PsbZ family. As to quaternary structure, PSII is composed of 1 copy each of membrane proteins PsbA, PsbB, PsbC, PsbD, PsbE, PsbF, PsbH, PsbI, PsbJ, PsbK, PsbL, PsbM, PsbT, PsbY, PsbZ, Psb30/Ycf12, at least 3 peripheral proteins of the oxygen-evolving complex and a large number of cofactors. It forms dimeric complexes.

It is found in the plastid. The protein localises to the chloroplast thylakoid membrane. Its function is as follows. May control the interaction of photosystem II (PSII) cores with the light-harvesting antenna, regulates electron flow through the 2 photosystem reaction centers. PSII is a light-driven water plastoquinone oxidoreductase, using light energy to abstract electrons from H(2)O, generating a proton gradient subsequently used for ATP formation. This chain is Photosystem II reaction center protein Z, found in Nymphaea alba (White water-lily).